Here is a 204-residue protein sequence, read N- to C-terminus: Pro-hevein (204 aa).

A signal peptide spans 1-17; it reads MNIFIVVLLCLTGVAIA. The region spanning 18-60 is the Chitin-binding type-1 domain; the sequence is EQCGRQAGGKLCPNNLCCSQWGWCGSTDEYCSPDHNCQSNCKD. 4 disulfides stabilise this stretch: C20–C35, C29–C41, C34–C48, and C54–C58. A propeptide spanning residues 61–66 is cleaved from the precursor; the sequence is SGEGVG. The Barwin domain maps to 68-189; that stretch reads GSASNVLATY…VNYQFVDCGD (122 aa). Cystine bridges form between C96-C128, C117-C151, and C131-C187.

Proteolytically processed to yield the two chains of the mature protein. As to expression, laticifer.

In terms of biological role, N-acetyl-D-glucosamine / N-acetyl-D-neuraminic acid binding lectin. Can inhibit fungal growth. The polypeptide is Pro-hevein (HEV1) (Hevea brasiliensis (Para rubber tree)).